The chain runs to 779 residues: Potassium/sodium hyperpolarization-activated cyclic nucleotide-gated channel 3 (779 aa).

Residues 1–47 form a disordered region; the sequence is MEEEARPAAGAGEAATPARETPPAAPAQARAASGGVPESAPEPKRRQ. The Cytoplasmic segment spans residues 1–96; that stretch reads MEEEARPAAG…PYSDFRFYWD (96 aa). Residues 7 to 32 show a composition bias toward low complexity; the sequence is PAAGAGEAATPARETPPAAPAQARAA. The tract at residues 45–90 is involved in subunit assembly; that stretch reads RRQLGTLLQPTVNKFSLRVFGSHKAVEIEQERVKSAGAWIIHPYSD. The helical transmembrane segment at 97 to 117 threads the bilayer; the sequence is LIMLLLMVGNLIVLPVGITFF. Over 118–123 the chain is Extracellular; it reads KEENSP. Residues 124 to 144 traverse the membrane as a helical segment; that stretch reads PWIVFNVLSDTFFLLDLVLNF. Topologically, residues 145 to 170 are cytoplasmic; sequence RTGIVVEEGAEILLAPRAIRTRYLRT. The chain crosses the membrane as a helical span at residues 171–191; it reads WFLVDLISSIPVDYIFLVVEL. The Extracellular portion of the chain corresponds to 192–200; sequence EPRLDAEVY. The helical; Voltage-sensor transmembrane segment at 201–221 threads the bilayer; sequence KTARALRIVRFTKILSLLRLL. At 222 to 252 the chain is on the cytoplasmic side; it reads RLSRLIRYIHQWEEIFHMTYDLASAVVRIFN. Residues 253 to 273 traverse the membrane as a helical segment; sequence LIGMMLLLCHWDGCLQFLVPM. Over 274–296 the chain is Extracellular; the sequence is LQDFPSDCWVSMNRMVNHSWGRQ. N-linked (GlcNAc...) asparagine glycosylation is present at asparagine 290. Positions 297 to 318 form an intramembrane region, pore-forming; sequence YSHALFKAMSHMLCIGYGQQAP. Residues 319-328 are Extracellular-facing; sequence VGMPDVWLTM. Residues 329–349 form a helical membrane-spanning segment; it reads LSMIVGATCYAMFIGHATALI. The Cytoplasmic portion of the chain corresponds to 350 to 779; the sequence is QSLDSSRRQY…PRGPQISANM (430 aa). The segment at 353–779 is interaction with KCTD3; sequence DSSRRQYQEK…PRGPQISANM (427 aa). Residues glycine 491, glutamate 492, cysteine 494, arginine 501, threonine 502, arginine 542, and arginine 545 each contribute to the 3',5'-cyclic AMP site. Positions 549 to 569 are disordered; it reads KNSILQRKRSEPSPGSSGGVM. Serine 633 is modified (phosphoserine). Positions 687–697 are enriched in polar residues; sequence SLSRTGRSQVS. Positions 687–779 are disordered; sequence SLSRTGRSQV…PRGPQISANM (93 aa).

It belongs to the potassium channel HCN family. Homotetramer. The potassium channel is composed of a homo- or heterotetrameric complex of pore-forming subunits. Interacts with HCN1. Interacts with KCTD3; this interaction increases cell surface expression and current density of this channel. Interacts with PEX5L. Detected in hypothalamus, amygdala, olfactory bulb, hippocampus and retina (at protein level). Highly expressed in brain and heart, in particular in ventricle, atrium and in sinoatrial node (SAN). Detected at low levels in skeletal muscle and lung. Expressed in DRG neurons.

It is found in the cell membrane. The enzyme catalyses K(+)(in) = K(+)(out). The catalysed reaction is Na(+)(in) = Na(+)(out). Unlike HCN2 and HCN4, HCN3 is insensitive to cyclic nucleotides, such as cAMP or cGMP. This lack of sensitivity of HCN3, despite harboring a functional cyclic nucleotide-binding domain (CNBD), may be explained by its shorter C-terminal sequence, which may alter the normal autoinhibition of the channel. Inhibited by Cs(1+) and ivabradine. Phosphatidylinositol-4,5-bisphosphate (PIP(2)) shifts HCN3 activation to more depolarized potentials and accelerated activation kinetics. Its function is as follows. Hyperpolarization-activated ion channel that are permeable to sodium and potassium ions, with an about 3:1 preference for potassium ions. Contributes to the native pacemaker currents in heart (If) and in neurons (Ih). In particular, plays a pivotal role in maintaining excitability and promoting rhythmic burst firing within hypothalamic nuclei. Exerts a significant influence on the configuration of the cardiac action potential waveform. Does not appear to play a prominent role in the processing of acute, neuropathic, or inflammatory pain. The protein is Potassium/sodium hyperpolarization-activated cyclic nucleotide-gated channel 3 (Hcn3) of Mus musculus (Mouse).